A 121-amino-acid chain; its full sequence is Basic phospholipase A2 homolog blK-PLA2 (121 aa).

Cystine bridges form between C26–C115, C28–C44, C43–C95, C49–C121, C50–C88, C57–C81, and C75–C86. The tract at residues 105 to 117 is important for membrane-damaging activities in eukaryotes and bacteria; heparin-binding; that stretch reads KKYRYHLKPFCKK.

The protein belongs to the phospholipase A2 family. Group II subfamily. K49 sub-subfamily. As to quaternary structure, homodimer; non-covalently linked. As to expression, expressed by the venom gland.

Its subcellular location is the secreted. In terms of biological role, snake venom phospholipase A2 (PLA2) homolog that lacks enzymatic activity. Shows myotoxic and edema-inducing activities in vivo. A model of myotoxic mechanism has been proposed: an apo Lys49-PLA2 is activated by the entrance of a hydrophobic molecule (e.g. fatty acid) at the hydrophobic channel of the protein leading to a reorientation of a monomer. This reorientation causes a transition between 'inactive' to 'active' states, causing alignment of C-terminal and membrane-docking sites (MDoS) side-by-side and putting the membrane-disruption sites (MDiS) in the same plane, exposed to solvent and in a symmetric position for both monomers. The MDoS region stabilizes the toxin on membrane by the interaction of charged residues with phospholipid head groups. Subsequently, the MDiS region destabilizes the membrane with penetration of hydrophobic residues. This insertion causes a disorganization of the membrane, allowing an uncontrolled influx of ions (i.e. calcium and sodium), and eventually triggering irreversible intracellular alterations and cell death. The polypeptide is Basic phospholipase A2 homolog blK-PLA2 (Bothrops leucurus (Whitetail lancehead)).